We begin with the raw amino-acid sequence, 429 residues long: Adenylosuccinate synthetase (429 aa).

GTP contacts are provided by residues 12-18 and 40-42; these read GDEGKGK and GHT. The Proton acceptor role is filled by aspartate 13. The Mg(2+) site is built by aspartate 13 and glycine 40. Residues 13 to 16, 38 to 41, threonine 128, arginine 142, glutamine 224, threonine 239, and arginine 303 contribute to the IMP site; these read DEGK and NAGH. Histidine 41 serves as the catalytic Proton donor. Residue 299–305 coordinates substrate; the sequence is VTTGRPR. Residues arginine 305, 331 to 333, and 413 to 415 each bind GTP; these read LLD and SVG.

Belongs to the adenylosuccinate synthetase family. In terms of assembly, homodimer. The cofactor is Mg(2+).

It is found in the cytoplasm. The enzyme catalyses IMP + L-aspartate + GTP = N(6)-(1,2-dicarboxyethyl)-AMP + GDP + phosphate + 2 H(+). It functions in the pathway purine metabolism; AMP biosynthesis via de novo pathway; AMP from IMP: step 1/2. Functionally, plays an important role in the de novo pathway of purine nucleotide biosynthesis. Catalyzes the first committed step in the biosynthesis of AMP from IMP. The protein is Adenylosuccinate synthetase of Clostridioides difficile (strain 630) (Peptoclostridium difficile).